The following is a 239-amino-acid chain: 1-(5-phosphoribosyl)-5-[(5-phosphoribosylamino)methylideneamino] imidazole-4-carboxamide isomerase (239 aa).

Catalysis depends on Asp8, which acts as the Proton acceptor. The Proton donor role is filled by Asp129.

It belongs to the HisA/HisF family.

The protein resides in the cytoplasm. It carries out the reaction 1-(5-phospho-beta-D-ribosyl)-5-[(5-phospho-beta-D-ribosylamino)methylideneamino]imidazole-4-carboxamide = 5-[(5-phospho-1-deoxy-D-ribulos-1-ylimino)methylamino]-1-(5-phospho-beta-D-ribosyl)imidazole-4-carboxamide. The protein operates within amino-acid biosynthesis; L-histidine biosynthesis; L-histidine from 5-phospho-alpha-D-ribose 1-diphosphate: step 4/9. The sequence is that of 1-(5-phosphoribosyl)-5-[(5-phosphoribosylamino)methylideneamino] imidazole-4-carboxamide isomerase from Bacillus cereus (strain B4264).